A 269-amino-acid polypeptide reads, in one-letter code: Propanediol uptake facilitator PduF (269 aa).

2 helical membrane-spanning segments follow: residues 10–30 (IAEF…LSAL) and 42–62 (ICII…GISG). The short motif at 66 to 68 (NPA) is the NPA 1 element. A run of 3 helical transmembrane segments spans residues 69–89 (ITIA…PYTV), 143–163 (VWQA…MIMA), and 179–199 (LLIG…TGFA). The short motif at 201–203 (NPA) is the NPA 2 element. The helical transmembrane segment at 228–248 (IPYFIVPIVAPIIGACAGAAI) threads the bilayer.

Belongs to the MIP/aquaporin (TC 1.A.8) family.

The protein localises to the cell inner membrane. In terms of biological role, probably facilitates diffusion of 1,2-propanediol (1,2-PD) into the cell. This is Propanediol uptake facilitator PduF from Citrobacter freundii.